The following is a 393-amino-acid chain: Serpin-Z4 (393 aa).

An RCL region spans residues 342-366 (GTEAAAVSVASMTKDMLLMGDFVAD).

Belongs to the serpin family.

Its function is as follows. Probable serine protease inhibitor. The chain is Serpin-Z4 from Arabidopsis thaliana (Mouse-ear cress).